The chain runs to 588 residues: ustiloxin B cluster transcription factor ustR (588 aa).

Residues 11–38 (CWTCRLRRKKCNEDGQPCSNCEARGVFC) constitute a DNA-binding region (zn(2)-C6 fungal-type). Residues 68 to 92 (RTRRARATPTNSINGEPRRPSIDMN) are disordered.

It is found in the nucleus. In terms of biological role, transcription factor that regulates the expression of the gene cluster that mediates the biosynthesis of ustiloxin B, an antimitotic tetrapeptide. The protein is ustiloxin B cluster transcription factor ustR of Aspergillus flavus (strain ATCC 200026 / FGSC A1120 / IAM 13836 / NRRL 3357 / JCM 12722 / SRRC 167).